Here is an 820-residue protein sequence, read N- to C-terminus: Trimethylamine-N-oxide reductase (820 aa).

The tat-type signal signal peptide spans 1 to 33 (MAITRRSFLKGVATTSAASVIGPSLLASASANA). Position 179 (serine 179) interacts with Mo-bis(molybdopterin guanine dinucleotide).

The protein belongs to the prokaryotic molybdopterin-containing oxidoreductase family. The cofactor is Mo-bis(molybdopterin guanine dinucleotide). In terms of processing, predicted to be exported by the Tat system. The position of the signal peptide cleavage has not been experimentally proven.

The protein localises to the periplasm. It catalyses the reaction trimethylamine + 2 Fe(III)-[cytochrome c] + H2O = trimethylamine N-oxide + 2 Fe(II)-[cytochrome c] + 3 H(+). Reduces trimethylamine-N-oxide (TMAO) into trimethylamine; an anaerobic reaction coupled to energy-yielding reactions. The protein is Trimethylamine-N-oxide reductase (torA) of Vibrio vulnificus (strain CMCP6).